The following is a 638-amino-acid chain: Probable potassium transport system protein Kup (638 aa).

Transmembrane regions (helical) follow at residues 25-45 (LAIAAIGVVFGDIGTSPLYSL), 65-85 (VISLLFWAIILVVGIKYLLFV), 114-134 (AGALMALGIFGACMFYGDAVI), 152-172 (PHLSHLVLPITIVILIALFWI), 184-204 (FGPIMVLWFVAIAALGVYHIV), 226-246 (LLQAYVVLGSVVLVLTGAEAL), 262-282 (AYGLVMPSLVLNYFGQGALLI), 291-311 (PFFLLAPEWGLLPLVILSTVA), 352-372 (IYVPVVNWLLLFVILCIVIGF), 382-402 (YGIAVTATMVITTVLAAVVMV), 410-430 (LLVGAIIAVFLAVDLGFFGAN), and 434-454 (VAQGGWLPLGIGALLFFLLMT).

This sequence belongs to the HAK/KUP transporter (TC 2.A.72) family.

The protein localises to the cell inner membrane. It catalyses the reaction K(+)(in) + H(+)(in) = K(+)(out) + H(+)(out). Transport of potassium into the cell. Likely operates as a K(+):H(+) symporter. The sequence is that of Probable potassium transport system protein Kup from Burkholderia lata (strain ATCC 17760 / DSM 23089 / LMG 22485 / NCIMB 9086 / R18194 / 383).